A 940-amino-acid chain; its full sequence is Fibronectin-binding protein B (940 aa).

Residues 1–36 (MKSNLRYGIRKHKLGAASVFLGTMIVVGMGQEKEAA) form the signal peptide. Residues 36–111 (AASEQNNTTV…PKVETSRVDL (76 aa)) are disordered. Residues 38 to 92 (SEQNNTTVEESGSSATESKASETQTTTNNVNTIDETQSYSATSTEQPSQSTQVTT) are compositionally biased toward polar residues. Residues 162–480 (TGTDVTNKVE…AQGDGKDKLK (319 aa)) form a fibrinogen/elastin/tropoelastin-binding region. Disordered regions lie at residues 676–746 (LGYE…NIID), 764–878 (IIEE…GKVV), and 892–918 (VPTK…NGML). Residues 681 to 718 (GQNSGNQSFEEDTEEDKPKYEQGGNIVDIDFDSVPQIH) form a D-1 repeat. The D-2 repeat unit spans residues 719 to 756 (GQNNGNQSFEEDTEKDKPKYEQGGNIIDIDFDSVPHIH). A D-3 repeat occupies 757–795 (GFNKHTEIIEEDTNKDKPNYQFGGHNSVDFEEDTLPQVS). Residues 764 to 774 (IIEEDTNKDKP) show a composition bias toward basic and acidic residues. The span at 792–802 (PQVSGHNEGQQ) shows a compositional bias: polar residues. The stretch at 796 to 814 (GHNEGQQTIEEDTTPPIVP) is one D-4; truncated repeat. Residues 811–860 (PIVPPTPPTPEVPSEPETPTPPTPEVPSEPETPTPPTPEVPTEPGKPIPP) are compositionally biased toward pro residues. WR repeat units follow at residues 815 to 828 (PTPP…EPET), 829 to 842 (PTPP…EPET), and 857 to 870 (PIPP…KPSK). The LPXTG sorting signal signature appears at 904–908 (LPETG). T907 is modified (pentaglycyl murein peptidoglycan amidated threonine). Positions 908–940 (GGEESTNNGMLFGGLFSILGLALLRRNKKNHKA) are cleaved as a propeptide — removed by sortase.

Interacts with host PLG; this interaction provides active plasmin on the surface of bacteria cells. Interacts with host histones.

It is found in the secreted. The protein localises to the cell wall. Its function is as follows. Multifunctional protein which promotes bacterial attachment to fibrinogen, elastin and fibronectin. Also promotes the accumulation phase and the primary attachment phase of biofilm formation. In addition, protects against the antimicrobial activity of histones. Mechanistically, captures histones and prevents them from reaching the bacterial membrane and simultaneously binds plasminogen, thereby promoting its conversion to plasmin to destroy the bound histones. The polypeptide is Fibronectin-binding protein B (Staphylococcus aureus (strain USA300)).